The following is a 199-amino-acid chain: UPF0316 protein LA_0606 (199 aa).

2 consecutive transmembrane segments (helical) span residues 47 to 67 (IAASLGFLEVLLWVVVITQVI) and 73 to 93 (VFCYLAYAGGFATGTFIGMIL).

It belongs to the UPF0316 family.

The protein localises to the cell membrane. The polypeptide is UPF0316 protein LA_0606 (Leptospira interrogans serogroup Icterohaemorrhagiae serovar Lai (strain 56601)).